Reading from the N-terminus, the 247-residue chain is Ribonuclease PH (247 aa).

Residues Arg87 and 125 to 127 (GTR) contribute to the phosphate site.

Belongs to the RNase PH family. Homohexameric ring arranged as a trimer of dimers.

It carries out the reaction tRNA(n+1) + phosphate = tRNA(n) + a ribonucleoside 5'-diphosphate. In terms of biological role, phosphorolytic 3'-5' exoribonuclease that plays an important role in tRNA 3'-end maturation. Removes nucleotide residues following the 3'-CCA terminus of tRNAs; can also add nucleotides to the ends of RNA molecules by using nucleoside diphosphates as substrates, but this may not be physiologically important. Probably plays a role in initiation of 16S rRNA degradation (leading to ribosome degradation) during starvation. In Trichormus variabilis (strain ATCC 29413 / PCC 7937) (Anabaena variabilis), this protein is Ribonuclease PH.